Reading from the N-terminus, the 389-residue chain is Phospho-N-acetylmuramoyl-pentapeptide-transferase (389 aa).

10 helical membrane passes run 25–45, 73–93, 97–117, 135–155, 190–210, 222–242, 259–279, 287–307, 311–331, and 366–386; these read RAVM…PAVI, TMGG…WADL, FIWI…VDDY, FWQS…VSEA, ISYP…IVGA, GLVI…AYVM, AGEL…FLWF, FMGD…AVIV, IVLF…MLQV, and QVVV…LSTL.

Belongs to the glycosyltransferase 4 family. MraY subfamily. It depends on Mg(2+) as a cofactor.

The protein localises to the cell inner membrane. It catalyses the reaction UDP-N-acetyl-alpha-D-muramoyl-L-alanyl-gamma-D-glutamyl-meso-2,6-diaminopimeloyl-D-alanyl-D-alanine + di-trans,octa-cis-undecaprenyl phosphate = di-trans,octa-cis-undecaprenyl diphospho-N-acetyl-alpha-D-muramoyl-L-alanyl-D-glutamyl-meso-2,6-diaminopimeloyl-D-alanyl-D-alanine + UMP. It functions in the pathway cell wall biogenesis; peptidoglycan biosynthesis. Catalyzes the initial step of the lipid cycle reactions in the biosynthesis of the cell wall peptidoglycan: transfers peptidoglycan precursor phospho-MurNAc-pentapeptide from UDP-MurNAc-pentapeptide onto the lipid carrier undecaprenyl phosphate, yielding undecaprenyl-pyrophosphoryl-MurNAc-pentapeptide, known as lipid I. The polypeptide is Phospho-N-acetylmuramoyl-pentapeptide-transferase (Paraburkholderia phytofirmans (strain DSM 17436 / LMG 22146 / PsJN) (Burkholderia phytofirmans)).